A 464-amino-acid chain; its full sequence is UDP-N-acetylmuramate--L-alanine ligase (464 aa).

112–118 is an ATP binding site; the sequence is GTHGKTT.

This sequence belongs to the MurCDEF family.

The protein resides in the cytoplasm. The catalysed reaction is UDP-N-acetyl-alpha-D-muramate + L-alanine + ATP = UDP-N-acetyl-alpha-D-muramoyl-L-alanine + ADP + phosphate + H(+). The protein operates within cell wall biogenesis; peptidoglycan biosynthesis. Cell wall formation. This is UDP-N-acetylmuramate--L-alanine ligase from Chromobacterium violaceum (strain ATCC 12472 / DSM 30191 / JCM 1249 / CCUG 213 / NBRC 12614 / NCIMB 9131 / NCTC 9757 / MK).